We begin with the raw amino-acid sequence, 653 residues long: Intermembrane lipid transfer protein vps13l (653 aa).

A B box-type zinc finger spans residues 5-49 (ISELKCQQHDKLVTIYCCACDAYFCKKCDKEKHSQDDNQEDSLHI). Zn(2+) contacts are provided by cysteine 10, histidine 13, cysteine 32, and histidine 37. Disordered stretches follow at residues 159-232 (NLID…NRKK), 248-420 (HILN…EDDS), and 627-653 (EKSN…PNEN). The segment covering 195-213 (SPSPSRSSESNSTTNNNNN) has biased composition (low complexity). Residues 266-277 (DYDDDDDNDDDN) are compositionally biased toward acidic residues. Residues 278–293 (NNNNNNNNNNNNNNNN) show a composition bias toward low complexity. A compositionally biased stretch (basic and acidic residues) spans 314–330 (ETEKEIENVENKIDNKP). Over residues 366-381 (IFEEEEEEEEDEDEVG) the composition is skewed to acidic residues.

The protein belongs to the VPS13 family.

It is found in the membrane. Its function is as follows. Mediates the transfer of lipids between membranes at organelle contact sites. The polypeptide is Intermembrane lipid transfer protein vps13l (vps13l) (Dictyostelium discoideum (Social amoeba)).